A 1159-amino-acid chain; its full sequence is WASH complex subunit 5 (1159 aa).

It belongs to the strumpellin family. In terms of assembly, component of the WASH complex.

Its subcellular location is the early endosome. Functionally, acts at least in part as component of the WASH complex which seems to regulate washc1 nucleation-promoting factor (NPF) activity and is required for its membrane targeting during endosomal sorting. The chain is WASH complex subunit 5 from Danio rerio (Zebrafish).